Reading from the N-terminus, the 254-residue chain is Small ribosomal subunit protein uS2 (254 aa).

The protein belongs to the universal ribosomal protein uS2 family.

This Legionella pneumophila (strain Corby) protein is Small ribosomal subunit protein uS2.